The primary structure comprises 513 residues: ATP synthase subunit alpha 1 (513 aa).

169–176 (GDRQTGKT) serves as a coordination point for ATP.

Belongs to the ATPase alpha/beta chains family. In terms of assembly, F-type ATPases have 2 components, CF(1) - the catalytic core - and CF(0) - the membrane proton channel. CF(1) has five subunits: alpha(3), beta(3), gamma(1), delta(1), epsilon(1). CF(0) has three main subunits: a(1), b(2) and c(9-12). The alpha and beta chains form an alternating ring which encloses part of the gamma chain. CF(1) is attached to CF(0) by a central stalk formed by the gamma and epsilon chains, while a peripheral stalk is formed by the delta and b chains.

It is found in the cell inner membrane. The enzyme catalyses ATP + H2O + 4 H(+)(in) = ADP + phosphate + 5 H(+)(out). Functionally, produces ATP from ADP in the presence of a proton gradient across the membrane. The alpha chain is a regulatory subunit. This Vibrio campbellii (strain ATCC BAA-1116) protein is ATP synthase subunit alpha 1.